A 156-amino-acid chain; its full sequence is Small ribosomal subunit protein uS7 (156 aa).

It belongs to the universal ribosomal protein uS7 family. As to quaternary structure, part of the 30S ribosomal subunit. Contacts proteins S9 and S11.

One of the primary rRNA binding proteins, it binds directly to 16S rRNA where it nucleates assembly of the head domain of the 30S subunit. Is located at the subunit interface close to the decoding center, probably blocks exit of the E-site tRNA. The protein is Small ribosomal subunit protein uS7 of Rhodococcus erythropolis (strain PR4 / NBRC 100887).